Reading from the N-terminus, the 92-residue chain is MTYLLKKNPFVANNLLKKINKLNRKAQKEIIITWSRGSTIIPIMIGHTIAIHNGKEHLPIYIMDDMVGHKLGEFAATLNFRGHEKGDNKSRR.

It belongs to the universal ribosomal protein uS19 family.

It is found in the plastid. In terms of biological role, protein S19 forms a complex with S13 that binds strongly to the 16S ribosomal RNA. The sequence is that of Small ribosomal subunit protein uS19c from Cuscuta gronovii (Common dodder).